Consider the following 152-residue polypeptide: MTHSVQLKILDKRLGSEFPLPAYATTGSAGLDLRACLDEPLKIEPDETCLISTGLAIYLGHSNVAATILPRSGLGHKHGIVLGNLVGLIDSDYQGPLMVSCWNRGKEPYTINPGDRIAQLVVLPILKAQFAVVEEFELTERGAGGFGSSGQN.

Residues 71 to 73, Asn-84, 88 to 90, and Met-98 contribute to the substrate site; these read RSG and LID.

Belongs to the dUTPase family. The cofactor is Mg(2+).

The catalysed reaction is dUTP + H2O = dUMP + diphosphate + H(+). It functions in the pathway pyrimidine metabolism; dUMP biosynthesis; dUMP from dCTP (dUTP route): step 2/2. Functionally, this enzyme is involved in nucleotide metabolism: it produces dUMP, the immediate precursor of thymidine nucleotides and it decreases the intracellular concentration of dUTP so that uracil cannot be incorporated into DNA. The polypeptide is Deoxyuridine 5'-triphosphate nucleotidohydrolase (Coxiella burnetii (strain RSA 331 / Henzerling II)).